We begin with the raw amino-acid sequence, 144 residues long: Large ribosomal subunit protein uL16 (144 aa).

It belongs to the universal ribosomal protein uL16 family. In terms of assembly, part of the 50S ribosomal subunit.

Its function is as follows. Binds 23S rRNA and is also seen to make contacts with the A and possibly P site tRNAs. This is Large ribosomal subunit protein uL16 from Pediococcus pentosaceus (strain ATCC 25745 / CCUG 21536 / LMG 10740 / 183-1w).